A 532-amino-acid chain; its full sequence is All-trans-retinyl ester 13-cis isomerohydrolase (532 aa).

Cysteine 112 is lipidated: S-palmitoyl cysteine; in membrane form. Residues histidine 180, histidine 241, and histidine 313 each contribute to the Fe cation site. A lipid anchor (S-palmitoyl cysteine; in membrane form) is attached at cysteine 329. Histidine 527 lines the Fe cation pocket.

Belongs to the carotenoid oxygenase family. Fe(2+) is required as a cofactor. Palmitoylated. Predominantly expressed in brain. Expressed at a low level in the eye.

The protein localises to the cytoplasm. It localises to the cell membrane. It carries out the reaction an all-trans-retinyl ester + H2O = 13-cis-retinol + a fatty acid + H(+). The catalysed reaction is lutein = (3R,3'S)-zeaxanthin. Functionally, specifically generates 13-cis retinol, a stereoisomeric form of retinoic acid. Capable of catalyzing the isomerization of lutein to meso-zeaxanthin an eye-specific carotenoid. The sequence is that of All-trans-retinyl ester 13-cis isomerohydrolase (rpe65b) from Danio rerio (Zebrafish).